Reading from the N-terminus, the 2467-residue chain is Polyprotein P1234 (2467 aa).

Positions 28 to 257 (EARQVTDNDH…EDRSLLRSWH (230 aa)) constitute an Alphavirus-like MT domain. Residues 242 to 261 (GSTIYTEDRSLLRSWHLPNV) are nsP1 membrane-binding. Residue Cys-417 is the site of S-palmitoyl cysteine; by host attachment. Residues 688-839 (DLVDPPFHEF…HDICTEVYHK (152 aa)) enclose the (+)RNA virus helicase ATP-binding domain. An a ribonucleoside 5'-triphosphate-binding site is contributed by 719–726 (GVPGSGKS). The (+)RNA virus helicase C-terminal domain occupies 840–988 (SISRRCTQTV…LDDWQREHDA (149 aa)). Positions 1001 to 1320 (DVFQNKVNVC…VVLDNIYQGS (320 aa)) constitute a Peptidase C9 domain. Residues 1002–1021 (VFQNKVNVCWAKALEPVLAT) form a nucleolus localization signal region. The For cysteine protease nsP2 activity role is filled by Cys-1010. The Nuclear export signal motif lies at 1054 to 1063 (TRFFGVDLDS). The For cysteine protease nsP2 activity role is filled by His-1079. The short motif at 1177–1181 (PGKKV) is the Nuclear localization signal element. In terms of domain architecture, Macro spans 1328-1486 (APAYRVIRGD…RIIEAIHRKE (159 aa)). Residues Asp-1337, Asn-1351, Gly-1359, Gly-1438, Ile-1439, and Tyr-1440 each contribute to the ADP-D-ribose site. Zn(2+) is bound by residues Cys-1588, Cys-1590, Cys-1613, and Cys-1631. The interval 1798–1833 (RPVPAPRRRPIPSPRSTASAPPVPKPRRTKYQQPPG) is disordered. Residues 1831 to 1847 (PPGVARAISEAELDEYI) form a binding to host FXR family members region. Residues 2224 to 2339 (DPVLETDIAS…HGVVSDTLMA (116 aa)) form the RdRp catalytic domain.

Interacts with non-structural protein 3. Interacts with RNA-directed RNA polymerase nsP4. Interacts with protease nsP2. interacts with itself. As to quaternary structure, interacts with mRNA-capping enzyme nsP1. Interacts with host DDX1. Interacts with host DDX3. Interacts (via C-terminus) with host FXR1; this interaction inhibits the formation of host stress granules on viral mRNAs and the nsp3-FXR1 complexes bind viral RNAs and probably orchestrate the assembly of viral replication complexes. Interacts (via C-terminus) with host FXR2; this interaction inhibits the formation of host stress granules on viral mRNAs and the nsp3-FXR2 complexes bind viral RNAs and probably orchestrate the assembly of viral replication complexes. Interacts (via C-terminus) with host FMR1; this interaction inhibits the formation of host stress granules on viral mRNAs and the nsp3-FMR1 complexes bind viral RNAs and probably orchestrate the assembly of viral replication complexes. In terms of assembly, interacts with mRNA-capping enzyme nsP1. Interacts with protease nsP2. interacts with itself. Interacts with RNA-directed RNA polymerase nsP4. Interacts with mRNA-capping enzyme nsP1. Interacts with KPNA1/karyopherin-alpha1; this interaction probably allows the active transport of protease nsP2 into the host nucleus. The cofactor is Mg(2+). Requires Mn(2+) as cofactor. Specific enzymatic cleavages in vivo yield mature proteins. The processing of the polyprotein is temporally regulated. In early stages (1.7 hpi), P1234 is first cleaved in trans through its nsP2 protease activity, releasing P123' and nsP4, which associate to form the early replication complex. At the same time, P1234 is also cut at the nsP1/nsP2 site early in infection but with lower efficiency. After replication of the viral minus-strand RNAs (4 hpi), the polyproteins are cut at the nsP1/nsP2 and nsP2/nsP3 sites very efficiently, preventing accumulation of P123' and P1234 and allowing the formation of the late replication complex. NsP3'/nsP4 site is not cleaved anymore and P34 is produced rather than nsP4. Post-translationally, specific enzymatic cleavages in vivo yield mature proteins. The processing of the polyprotein is temporally regulated. In early stages (1.7 hpi), P123 is cleaved at the nsP1/nsP2 site with low efficiency. After replication of the viral minus-strand RNAs (4 hpi), the polyproteins are cut at the nsP1/nsP2 and nsP2/nsP3 sites very efficiently, preventing accumulation of P123 and allowing the formation of the late replication complex. In terms of processing, specific enzymatic cleavages in vivo yield mature proteins. The processing of the polyprotein is temporally regulated. In early stages (1.7 hpi), P123' is cleaved at the nsP1/nsP2 site with low efficiency. After replication of the viral minus-strand RNAs (4 hpi), the polyproteins are cut at the nsP1/nsP2 and nsP2/nsP3 sites very efficiently, preventing accumulation of P123' and allowing the formation of the late replication complex. Palmitoylated by host palmitoyltransferases ZDHHC2 and ZDHHC19. Post-translationally, phosphorylated by host on serines and threonines. In terms of processing, ubiquitinated; targets the protein for rapid degradation via the ubiquitin system. Nsp4 is present in extremely low quantities due to low frequency of translation through the amber stop-codon and the degradation by the ubiquitin pathway.

The protein resides in the host cytoplasmic vesicle membrane. The protein localises to the host cell membrane. It localises to the host cell projection. It is found in the host filopodium. Its subcellular location is the host nucleus. The protein resides in the host cytoplasm. The enzyme catalyses GTP + S-adenosyl-L-methionine = N(7)-methyl-GTP + S-adenosyl-L-homocysteine. It catalyses the reaction N(7)-methyl-GTP + L-histidyl-[protein] = N(tele)-(N(7)-methylguanosine 5'-phospho)-L-histidyl-[protein] + diphosphate. The catalysed reaction is N(tele)-(N(7)-methylguanosine 5'-phospho)-L-histidyl-[protein] + a 5'-end diphospho-(purine-ribonucleoside) in mRNA + H(+) = a 5'-end (N(7)-methyl 5'-triphosphoguanosine)-(purine-ribonucleoside) in mRNA + L-histidyl-[protein]. It carries out the reaction a 5'-end triphospho-ribonucleoside in mRNA + H2O = a 5'-end diphospho-ribonucleoside in mRNA + phosphate + H(+). The enzyme catalyses a ribonucleoside 5'-triphosphate + H2O = a ribonucleoside 5'-diphosphate + phosphate + H(+). It catalyses the reaction ATP + H2O = ADP + phosphate + H(+). The catalysed reaction is RNA(n) + a ribonucleoside 5'-triphosphate = RNA(n+1) + diphosphate. It carries out the reaction 4-O-(ADP-D-ribosyl)-L-aspartyl-[protein] + H2O = L-aspartyl-[protein] + ADP-D-ribose + H(+). The enzyme catalyses 5-O-(ADP-D-ribosyl)-L-glutamyl-[protein] + H2O = L-glutamyl-[protein] + ADP-D-ribose + H(+). It catalyses the reaction RNA(n) + ATP = RNA(n)-3'-adenine ribonucleotide + diphosphate. The catalysed reaction is ADP-alpha-D-ribose 1''-phosphate + H2O = ADP-D-ribose + phosphate. Inhibited by sinefungin. Its function is as follows. Inactive precursor of the viral replicase, which is activated by cleavages carried out by the viral protease nsP2. The early replication complex formed by the polyprotein P123 and nsP4 synthesizes the minus-strand RNAs (antigenome). Polyprotein P123 is a short-lived polyprotein that accumulates during early stage of infection. As soon P123 is cleaved into mature proteins, the plus-strand RNAs synthesis begins. Functionally, the early replication complex formed by the polyprotein P123' and nsP4 synthesizes minus-strand RNAs (antigenome). Polyprotein P123' is a short-lived polyprotein that accumulates during early stage of infection. As soon P123' is cleaved into mature proteins, the plus-strand RNAs synthesis begins. In terms of biological role, cytoplasmic capping enzyme that catalyzes two virus-specific reactions: methyltransferase and nsP1 guanylyltransferase. mRNA-capping is necessary since all viral RNAs are synthesized in the cytoplasm, and host capping enzymes are restricted to the nucleus. The enzymatic reaction involves a covalent link between 7-methyl-GMP and nsP1, whereas eukaryotic capping enzymes form a covalent complex only with GMP. NsP1 capping consists in the following reactions: GTP is first methylated into 7-methyl-GMP and then is covalently linked to nsP1 to form the m7GMp-nsP1 complex from which 7-methyl-GMP complex is transferred to the mRNA to create the cap structure. NsP1 is also needed for the initiation of the minus-strand RNAs synthesis. Probably serves as a membrane anchor for the replication complex composed of nsP1-nsP4. Nsp1 is needed for the initiation of the minus-strand RNAs synthesis. Palmitoylated nsP1 is remodeling host cell cytoskeleton, and induces filopodium-like structure formation at the surface of the host cell. Its function is as follows. Multifunctional protein whose N-terminus is part of the RNA polymerase complex and displays NTPase, RNA triphosphatase and helicase activities. NTPase and RNA triphosphatase are involved in viral RNA capping and helicase keeps a check on the dsRNA replication intermediates. The C-terminus harbors a protease that specifically cleaves the polyproteins and releases the mature proteins. Required for the shutoff of minus-strand RNAs synthesis. Inhibits host translation to ensure maximal viral gene expression and evade host immune response. Seems to be essential for minus-strand RNAs and subgenomic 26S mRNAs synthesis. Displays mono-ADP-ribosylhydrolase activity. ADP-ribosylation is a post-translational modification that controls various processes of the host cell and the virus probably needs to revert it for optimal viral replication. Binds proteins of FXR and G3BP families and sequesters them into the viral RNA replication complexes thereby inhibiting the formation of host stress granules on viral mRNAs. The nsp3-FXR and nsp3-G3BP complexes bind viral RNAs and probably orchestrate the assembly of viral replication complexes, thanks to the ability of G3BP and FXR family members to self-assemble and bind DNA. Functionally, seems to be essential for minus-strand RNAs and subgenomic 26S mRNAs synthesis. Displays mono-ADP-ribosylhydrolase activity. ADP-ribosylation is a post-translational modification that controls various processes of the host cell and the virus probably needs to revert it for optimal viral replication. Binds proteins of FXR and G3BP families and sequesters them into the viral RNA replication complexes thereby inhibiting the formation of host stress granules on viral mRNAs. The nsp3'-FXR and nsp3-G3BP complexes bind viral RNAs and probably orchestrate the assembly of viral replication complexes, thanks to the ability of G3BP and FXR family members to self-assemble and bind DNA. In terms of biological role, RNA dependent RNA polymerase. Replicates genomic and antigenomic RNA by recognizing replications specific signals. The early replication complex formed by the polyprotein P123 and nsP4 synthesizes minus-strand RNAs. The late replication complex composed of fully processed nsP1-nsP4 is responsible for the production of genomic and subgenomic plus-strand RNAs. This Western equine encephalitis virus (WEEV) protein is Polyprotein P1234.